Here is a 530-residue protein sequence, read N- to C-terminus: Inactive ubiquitin carboxyl-terminal hydrolase 17-like protein 4 (530 aa).

Positions 80 to 375 constitute a USP domain; it reads AGLQNMGNTC…QAYVLFYIQK (296 aa). Basic and acidic residues predominate over residues 382-392; sequence SESVSRGREPR. Disordered stretches follow at residues 382-410 and 493-530; these read SESV…ELKR and NSTD…LVCQ. Residues 495-510 show a composition bias toward polar residues; it reads TDQESMNTGTLASLQG. The segment covering 511-524 has biased composition (basic residues); sequence RTRRSKGKNKHSKR.

Belongs to the peptidase C19 family. USP17 subfamily.

Its subcellular location is the nucleus. It is found in the endoplasmic reticulum. The polypeptide is Inactive ubiquitin carboxyl-terminal hydrolase 17-like protein 4 (USP17L4) (Homo sapiens (Human)).